A 280-amino-acid chain; its full sequence is 2-C-methyl-D-erythritol 4-phosphate cytidylyltransferase (280 aa).

Belongs to the IspD/TarI cytidylyltransferase family. IspD subfamily.

The enzyme catalyses 2-C-methyl-D-erythritol 4-phosphate + CTP + H(+) = 4-CDP-2-C-methyl-D-erythritol + diphosphate. The protein operates within isoprenoid biosynthesis; isopentenyl diphosphate biosynthesis via DXP pathway; isopentenyl diphosphate from 1-deoxy-D-xylulose 5-phosphate: step 2/6. In terms of biological role, catalyzes the formation of 4-diphosphocytidyl-2-C-methyl-D-erythritol from CTP and 2-C-methyl-D-erythritol 4-phosphate (MEP). The polypeptide is 2-C-methyl-D-erythritol 4-phosphate cytidylyltransferase (Psychrobacter cryohalolentis (strain ATCC BAA-1226 / DSM 17306 / VKM B-2378 / K5)).